The following is a 110-amino-acid chain: uncharacterized protein (110 aa).

The signal sequence occupies residues M1 to A16. C17 carries N-palmitoyl cysteine lipidation. C17 carries the S-diacylglycerol cysteine lipid modification.

It is found in the cell membrane. This is an uncharacterized protein from Salmonella typhimurium (strain LT2 / SGSC1412 / ATCC 700720).